A 335-amino-acid polypeptide reads, in one-letter code: Protein STRICTOSIDINE SYNTHASE-LIKE 12 (335 aa).

Residues 1–22 (MTSFCSMISLLLLLSLSSAVFS) form the signal peptide. N80 carries an N-linked (GlcNAc...) asparagine glycan.

It belongs to the strictosidine synthase family.

The protein localises to the vacuole. The enzyme catalyses 3alpha(S)-strictosidine + H2O = secologanin + tryptamine. Its pathway is alkaloid biosynthesis; 3alpha(S)-strictosidine biosynthesis; 3alpha(S)-strictosidine from secologanin and tryptamine: step 1/1. In terms of biological role, catalyzes the stereospecific condensation of tryptamine with secologanin to form strictosidine, the key intermediate of indole alkaloid biosynthesis. The sequence is that of Protein STRICTOSIDINE SYNTHASE-LIKE 12 from Arabidopsis thaliana (Mouse-ear cress).